The chain runs to 212 residues: Urease accessory protein UreG (212 aa).

19 to 26 (GPVGSGKT) provides a ligand contact to GTP.

This sequence belongs to the SIMIBI class G3E GTPase family. UreG subfamily. As to quaternary structure, homodimer. UreD, UreF and UreG form a complex that acts as a GTP-hydrolysis-dependent molecular chaperone, activating the urease apoprotein by helping to assemble the nickel containing metallocenter of UreC. The UreE protein probably delivers the nickel.

It is found in the cytoplasm. Facilitates the functional incorporation of the urease nickel metallocenter. This process requires GTP hydrolysis, probably effectuated by UreG. The polypeptide is Urease accessory protein UreG (Vibrio parahaemolyticus).